The following is a 342-amino-acid chain: UDP-N-acetylglucosamine--N-acetylmuramyl-(pentapeptide) pyrophosphoryl-undecaprenol N-acetylglucosamine transferase (342 aa).

UDP-N-acetyl-alpha-D-glucosamine contacts are provided by residues 10-12 (TGG), Asn-124, Ser-177, and Gln-275.

The protein belongs to the glycosyltransferase 28 family. MurG subfamily.

It is found in the cell inner membrane. The enzyme catalyses di-trans,octa-cis-undecaprenyl diphospho-N-acetyl-alpha-D-muramoyl-L-alanyl-D-glutamyl-meso-2,6-diaminopimeloyl-D-alanyl-D-alanine + UDP-N-acetyl-alpha-D-glucosamine = di-trans,octa-cis-undecaprenyl diphospho-[N-acetyl-alpha-D-glucosaminyl-(1-&gt;4)]-N-acetyl-alpha-D-muramoyl-L-alanyl-D-glutamyl-meso-2,6-diaminopimeloyl-D-alanyl-D-alanine + UDP + H(+). It participates in cell wall biogenesis; peptidoglycan biosynthesis. In terms of biological role, cell wall formation. Catalyzes the transfer of a GlcNAc subunit on undecaprenyl-pyrophosphoryl-MurNAc-pentapeptide (lipid intermediate I) to form undecaprenyl-pyrophosphoryl-MurNAc-(pentapeptide)GlcNAc (lipid intermediate II). The sequence is that of UDP-N-acetylglucosamine--N-acetylmuramyl-(pentapeptide) pyrophosphoryl-undecaprenol N-acetylglucosamine transferase from Campylobacter jejuni (strain RM1221).